The primary structure comprises 143 residues: Large-conductance mechanosensitive channel (143 aa).

The next 2 helical transmembrane spans lie at 10–30 (FAVK…GAFS) and 89–109 (GSFI…FLMV).

Belongs to the MscL family. In terms of assembly, homopentamer.

It is found in the cell inner membrane. In terms of biological role, channel that opens in response to stretch forces in the membrane lipid bilayer. May participate in the regulation of osmotic pressure changes within the cell. This Burkholderia cenocepacia (strain ATCC BAA-245 / DSM 16553 / LMG 16656 / NCTC 13227 / J2315 / CF5610) (Burkholderia cepacia (strain J2315)) protein is Large-conductance mechanosensitive channel.